The sequence spans 431 residues: Glucose-1-phosphate adenylyltransferase (431 aa).

Lysine 39 provides a ligand contact to beta-D-fructose 1,6-bisphosphate. Positions 40, 46, and 52 each coordinate AMP. Residue tyrosine 114 participates in alpha-D-glucose 1-phosphate binding. Residue arginine 130 coordinates AMP. Residues glycine 179, 194-195, and serine 212 contribute to the alpha-D-glucose 1-phosphate site; that span reads EK. AMP is bound by residues glutamate 370 and arginine 386. Residues 419–423 and 429–431 each bind beta-D-fructose 1,6-bisphosphate; these read REMLR and QER.

This sequence belongs to the bacterial/plant glucose-1-phosphate adenylyltransferase family. Homotetramer.

The catalysed reaction is alpha-D-glucose 1-phosphate + ATP + H(+) = ADP-alpha-D-glucose + diphosphate. It functions in the pathway glycan biosynthesis; glycogen biosynthesis. With respect to regulation, allosterically activated by fructose-1,6-bisphosphate (F16BP) and inhibited by AMP. Involved in the biosynthesis of ADP-glucose, a building block required for the elongation reactions to produce glycogen. Catalyzes the reaction between ATP and alpha-D-glucose 1-phosphate (G1P) to produce pyrophosphate and ADP-Glc. In Salmonella paratyphi A (strain ATCC 9150 / SARB42), this protein is Glucose-1-phosphate adenylyltransferase.